The sequence spans 174 residues: Bifunctional protein PyrR (174 aa).

Residues 38–39 (SG), 95–103 (DDVLATGRT), and R128 each bind substrate. The PRPP-binding motif lies at 91–103 (ILLVDDVLATGRT).

It belongs to the purine/pyrimidine phosphoribosyltransferase family. PyrR subfamily.

It carries out the reaction UMP + diphosphate = 5-phospho-alpha-D-ribose 1-diphosphate + uracil. In terms of biological role, regulates the transcription of the pyrimidine nucleotide (pyr) operon in response to exogenous pyrimidines. Its function is as follows. Also displays a weak uracil phosphoribosyltransferase activity which is not physiologically significant. The polypeptide is Bifunctional protein PyrR (Ralstonia nicotianae (strain ATCC BAA-1114 / GMI1000) (Ralstonia solanacearum)).